Reading from the N-terminus, the 1051-residue chain is Protein ALWAYS EARLY 2 (1051 aa).

Composition is skewed to basic residues over residues 1–11 (MAPVRKSRSVN) and 27–36 (SKKNKLRKKL). Residues 1-37 (MAPVRKSRSVNKRFTNETSPRKDAGKSKKNKLRKKLS) form a disordered region. An SANT domain is found at 39–93 (KLGPQWTRLELERFYDAYRKHGQEWRRVAAAIRNSRSVDMVEALFNMNRAYLSLP). Disordered stretches follow at residues 114 to 158 (EGSG…IGSP), 170 to 210 (ANGT…RKQF), 225 to 293 (TDAS…KDTT), 323 to 375 (AECN…TSGA), 397 to 605 (SELS…SSRS), and 948 to 981 (SIEH…NAQM). A compositionally biased stretch (basic and acidic residues) spans 120 to 130 (GEGHDASEVPR). Over residues 131-140 (KQQKRKRAKP) the composition is skewed to basic residues. The segment covering 279–293 (ESSRERKLDSDKDTT) has biased composition (basic and acidic residues). The segment covering 323-332 (AECNDSDDNG) has biased composition (acidic residues). Composition is skewed to basic and acidic residues over residues 350–372 (AAIE…DKHT) and 403–417 (LKEE…EKSS). The segment covering 560 to 574 (KQVSDSGPTSLSQKP) has biased composition (polar residues). Over residues 586–597 (LQEKAKSSETTH) the composition is skewed to basic and acidic residues. Polar residues predominate over residues 967–981 (NDLNSQDGSEKNAQM).

As to quaternary structure, interacts with SNL1 (via PAH3). Expressed ubiquitously in vegetative and reproductive tissues.

The protein localises to the nucleus. This chain is Protein ALWAYS EARLY 2 (ALY2), found in Arabidopsis thaliana (Mouse-ear cress).